The sequence spans 317 residues: Methionyl-tRNA formyltransferase (317 aa).

112 to 115 (SLLP) is a (6S)-5,6,7,8-tetrahydrofolate binding site.

It belongs to the Fmt family.

The catalysed reaction is L-methionyl-tRNA(fMet) + (6R)-10-formyltetrahydrofolate = N-formyl-L-methionyl-tRNA(fMet) + (6S)-5,6,7,8-tetrahydrofolate + H(+). Functionally, attaches a formyl group to the free amino group of methionyl-tRNA(fMet). The formyl group appears to play a dual role in the initiator identity of N-formylmethionyl-tRNA by promoting its recognition by IF2 and preventing the misappropriation of this tRNA by the elongation apparatus. In Mycobacterium avium (strain 104), this protein is Methionyl-tRNA formyltransferase.